The following is a 767-amino-acid chain: 5-methyltetrahydropteroyltriglutamate--homocysteine methyltransferase (767 aa).

5-methyltetrahydropteroyltri-L-glutamate contacts are provided by residues R17–K20 and K117. Residues I442 to S444 and E495 contribute to the L-homocysteine site. L-methionine is bound by residues I442 to S444 and E495. 5-methyltetrahydropteroyltri-L-glutamate contacts are provided by residues R526–C527 and W572. An L-homocysteine-binding site is contributed by D610. L-methionine is bound at residue D610. Position 616 (E616) interacts with 5-methyltetrahydropteroyltri-L-glutamate. Zn(2+)-binding residues include H653, C655, and E677. H706 acts as the Proton donor in catalysis. C738 is a Zn(2+) binding site.

This sequence belongs to the vitamin-B12 independent methionine synthase family. The cofactor is Zn(2+).

It catalyses the reaction 5-methyltetrahydropteroyltri-L-glutamate + L-homocysteine = tetrahydropteroyltri-L-glutamate + L-methionine. The protein operates within amino-acid biosynthesis; L-methionine biosynthesis via de novo pathway; L-methionine from L-homocysteine (MetE route): step 1/1. Functionally, catalyzes the transfer of a methyl group from 5-methyltetrahydrofolate to homocysteine resulting in methionine formation. This Bifidobacterium animalis subsp. lactis (strain AD011) protein is 5-methyltetrahydropteroyltriglutamate--homocysteine methyltransferase.